Here is a 212-residue protein sequence, read N- to C-terminus: Thymidylate kinase (212 aa).

10–17 (GGEGSGKT) contacts ATP.

This sequence belongs to the thymidylate kinase family.

The enzyme catalyses dTMP + ATP = dTDP + ADP. Phosphorylation of dTMP to form dTDP in both de novo and salvage pathways of dTTP synthesis. This is Thymidylate kinase from Marinomonas sp. (strain MWYL1).